Consider the following 77-residue polypeptide: Liver-expressed antimicrobial peptide 2 (77 aa).

The first 22 residues, 1–22 (MWHLKLCAVLMIFLLLLGQTDG), serve as a signal peptide directing secretion. A propeptide spanning residues 23-37 (SPIPEVSSAKRRPRR) is cleaved from the precursor. Disulfide bonds link Cys54/Cys65 and Cys60/Cys70.

This sequence belongs to the LEAP2 family.

The protein localises to the secreted. Its function is as follows. Has an antimicrobial activity. This is Liver-expressed antimicrobial peptide 2 (LEAP2) from Macaca mulatta (Rhesus macaque).